Reading from the N-terminus, the 134-residue chain is Secretin (134 aa).

A signal peptide spans 1 to 21 (MATRALLLLLLLPPLLLLAGC). Residues 22 to 31 (AARPAPPRAP) constitute a propeptide that is removed on maturation. V59 carries the post-translational modification Valine amide. A Phosphoserine modification is found at S63. The propeptide occupies 63-134 (SQQDPENNTA…PAAEGSPMPP (72 aa)).

The protein belongs to the glucagon family.

The protein resides in the secreted. In terms of biological role, hormone involved in different processes, such as regulation of the pH of the duodenal content, food intake and water homeostasis. Exerts its biological effects by binding to secretin receptor (SCTR), a G-protein coupled receptor expressed in the basolateral domain of several cells. Acts as a key gastrointestinal hormone by regulating the pH of the duodenal content. Secreted by S cells of the duodenum in the crypts of Lieberkuehn and regulates the pH of the duodenum by (1) inhibiting the secretion of gastric acid from the parietal cells of the stomach and (2) stimulating the production of bicarbonate (NaHCO(3)) from the ductal cells of the pancreas. Production of bicarbonate is essential to neutralize the pH and ensure no damage is done to the small intestine by the gastric acid. In addition to regulating the pH of the duodenal content, plays a central role in diet induced thermogenesis: acts as a non-sympathetic brown fat (BAT) activator mediating prandial thermogenesis, which consequentially induces satiation. Mechanistically, secretin released by the gut after a meal binds to secretin receptor (SCTR) in brown adipocytes, activating brown fat thermogenesis by stimulating lipolysis, which is sensed in the brain and promotes satiation. Also able to stimulate lipolysis in white adipocytes. Also plays an important role in cellular osmoregulation: released into the systemic circulation in response to hyperosmolality and acts at different levels in the hypothalamus, pituitary and kidney to regulate water homeostasis. Also plays a role in the central nervous system, possibly by acting as a neuropeptide hormone: required for hippocampal synaptic function and neural progenitor cells maintenance. The sequence is that of Secretin from Sus scrofa (Pig).